We begin with the raw amino-acid sequence, 334 residues long: Ornithine carbamoyltransferase (334 aa).

Residues 56 to 59 (STRT), Gln-83, Arg-107, and 134 to 137 (HPTQ) contribute to the carbamoyl phosphate site. L-ornithine contacts are provided by residues Asn-168, Asp-232, and 236–237 (SM). Carbamoyl phosphate contacts are provided by residues 274-275 (CL) and Arg-320.

The protein belongs to the aspartate/ornithine carbamoyltransferase superfamily. OTCase family.

The protein localises to the cytoplasm. The enzyme catalyses carbamoyl phosphate + L-ornithine = L-citrulline + phosphate + H(+). The protein operates within amino-acid biosynthesis; L-arginine biosynthesis; L-arginine from L-ornithine and carbamoyl phosphate: step 1/3. Its function is as follows. Reversibly catalyzes the transfer of the carbamoyl group from carbamoyl phosphate (CP) to the N(epsilon) atom of ornithine (ORN) to produce L-citrulline. The chain is Ornithine carbamoyltransferase from Escherichia coli (strain 55989 / EAEC).